Here is a 239-residue protein sequence, read N- to C-terminus: Tumor necrosis factor ligand superfamily member 14 (239 aa).

Topologically, residues 1–37 (MESVVQPSVFVVDGQTDIPFRRLEQNHRRRRCGTVQV) are cytoplasmic. A helical; Signal-anchor for type II membrane protein transmembrane segment spans residues 38-58 (SLALVLLLGAGLATQGWFLLR). Over 59–239 (LHQRLGDIVA…TRSYFGAFMV (181 aa)) the chain is Extracellular. One can recognise a THD domain in the interval 92–239 (PAAHLTGANA…TRSYFGAFMV (148 aa)). N-linked (GlcNAc...) asparagine glycosylation is present at Asn100. A disulfide bond links Cys152 and Cys187. The N-linked (GlcNAc...) asparagine glycan is linked to Asn191.

This sequence belongs to the tumor necrosis factor family. In terms of assembly, homotrimer. Interacts with TNFRSF14. The soluble form derives from the membrane form by proteolytic processing.

It localises to the cell membrane. It is found in the secreted. In terms of biological role, cytokine that binds to TNFRSF3/LTBR. Binding to the decoy receptor TNFRSF6B modulates its effects. Activates NFKB and stimulates the proliferation of T-cells. Acts as a ligand for TNFRSF14/HVEM. Upon binding to TNFRSF14/HVEM, delivers costimulatory signals to T cells, leading to T cell proliferation and IFNG production. The protein is Tumor necrosis factor ligand superfamily member 14 (Tnfsf14) of Mus musculus (Mouse).